A 670-amino-acid polypeptide reads, in one-letter code: Protein HBS1 (670 aa).

Disordered stretches follow at residues 60–88 (KDIQ…ESFQ) and 164–202 (KTVS…VSGR). Positions 63-75 (QEEEADEDEDEDA) are enriched in acidic residues. Residues 189–200 (PSPKVPSSPVVS) show a composition bias toward low complexity. The region spanning 245–468 (KSHIHMIVIG…DVIENFKIPE (224 aa)) is the tr-type G domain. The interval 254-261 (GHVDAGKS) is G1. 254-261 (GHVDAGKS) contributes to the GTP binding site. A G2 region spans residues 310–314 (GITMD). Positions 331-334 (DAPG) are G3. GTP contacts are provided by residues 393–396 (NKLD) and 432–434 (SGL). Residues 393 to 396 (NKLD) form a G4 region. The tract at residues 432 to 434 (SGL) is G5.

The protein belongs to the TRAFAC class translation factor GTPase superfamily. Classic translation factor GTPase family. As to quaternary structure, component of the Pelota-HBS1L complex, also named Dom34-Hbs1 complex, composed of pelo and HBS1. As to expression, expressed in ovaries (at protein level).

The protein resides in the cytoplasm. It carries out the reaction GTP + H2O = GDP + phosphate + H(+). Its function is as follows. GTPase component of the Pelota-HBS1L complex, a complex that recognizes stalled ribosomes and triggers the No-Go Decay (NGD) pathway. The Pelota-HBS1L complex recognizes ribosomes stalled at the 3' end of an mRNA and engages stalled ribosomes by destabilizing mRNA in the mRNA channel. Following ribosome-binding, the Pelota-HBS1L complex promotes recruitment of pix, which drives the disassembly of stalled ribosomes, followed by degradation of damaged mRNAs as part of the NGD pathway. Together with pelo, required for transposon silencing in the ovary and testis. Together with pelo, promotes meiosis and spermatid individualization during spermatogenesis. This is Protein HBS1 from Drosophila melanogaster (Fruit fly).